Reading from the N-terminus, the 448-residue chain is Proton extrusion protein PxcA (448 aa).

4 helical membrane passes run 231-251 (ILLL…FFLI), 323-343 (IDSI…VLVL), 372-392 (LIIL…WEVI), and 408-428 (FNFL…KYWI).

The protein belongs to the CemA family.

The protein localises to the cell inner membrane. Its function is as follows. Required for H(+) efflux immediately after light irradiation to form a rapid H(+) concentration gradient across the thylakoid membranes. Together with PxcL, contributes to transient H(+) uptake following dark to light transition. The polypeptide is Proton extrusion protein PxcA (Rippkaea orientalis (strain PCC 8801 / RF-1) (Cyanothece sp. (strain PCC 8801))).